The sequence spans 67 residues: Small ribosomal subunit protein bS21 (67 aa).

This sequence belongs to the bacterial ribosomal protein bS21 family.

The polypeptide is Small ribosomal subunit protein bS21 (Paramagnetospirillum magneticum (strain ATCC 700264 / AMB-1) (Magnetospirillum magneticum)).